We begin with the raw amino-acid sequence, 236 residues long: Uridylate kinase (236 aa).

10–13 (KLSG) provides a ligand contact to ATP. G52 provides a ligand contact to UMP. G53 and R57 together coordinate ATP. UMP is bound by residues D72 and 133–140 (TGNPFFTT). Positions 160, 166, and 169 each coordinate ATP.

It belongs to the UMP kinase family. In terms of assembly, homohexamer.

It localises to the cytoplasm. The enzyme catalyses UMP + ATP = UDP + ADP. Its pathway is pyrimidine metabolism; CTP biosynthesis via de novo pathway; UDP from UMP (UMPK route): step 1/1. Inhibited by UTP. Functionally, catalyzes the reversible phosphorylation of UMP to UDP. The protein is Uridylate kinase of Bacteroides fragilis (strain ATCC 25285 / DSM 2151 / CCUG 4856 / JCM 11019 / LMG 10263 / NCTC 9343 / Onslow / VPI 2553 / EN-2).